Consider the following 294-residue polypeptide: 2,2',3-trihydroxybiphenyl dioxygenase (294 aa).

2 consecutive VOC domains span residues 7 to 120 (GYLI…LYVE) and 144 to 264 (GLGH…LGFG). Fe cation contacts are provided by His147, His209, and Glu260.

It belongs to the extradiol ring-cleavage dioxygenase family. In terms of assembly, monomer. Fe(2+) is required as a cofactor.

Its pathway is xenobiotic degradation; dibenzo-p-dioxin degradation; 2-hydroxymuconate and catechol from dibenzo-p-dioxin: step 2/3. It functions in the pathway xenobiotic degradation; dibenzofuran degradation; 2-hydroxy-2,4-pentadienoate and salicylate from dibenzofuran: step 2/3. In terms of biological role, responsible for meta-cleavage of the first aromatic ring of 2,2',3-trihydroxybiphenyl and 2,3-dihydroxybiphenyl. 2,2',3-trihydroxydiphenyl ether, catechol, 3-methylcatechol, and 4-methylcatechol are oxidized less efficiently and 3,4-dihydroxybiphenyl is oxidized considerably less efficiently. In Sphingomonas paucimobilis (Pseudomonas paucimobilis), this protein is 2,2',3-trihydroxybiphenyl dioxygenase (dbfB).